A 232-amino-acid polypeptide reads, in one-letter code: Phosphoribosylformylglycinamidine synthase subunit PurQ (232 aa).

The Glutamine amidotransferase type-1 domain occupies 2–232 (KIAIIQFGGT…SMADYITENF (231 aa)). C86 (nucleophile) is an active-site residue. Active-site residues include H203 and E205.

In terms of assembly, part of the FGAM synthase complex composed of 1 PurL, 1 PurQ and 2 PurS subunits.

It is found in the cytoplasm. The enzyme catalyses N(2)-formyl-N(1)-(5-phospho-beta-D-ribosyl)glycinamide + L-glutamine + ATP + H2O = 2-formamido-N(1)-(5-O-phospho-beta-D-ribosyl)acetamidine + L-glutamate + ADP + phosphate + H(+). The catalysed reaction is L-glutamine + H2O = L-glutamate + NH4(+). It functions in the pathway purine metabolism; IMP biosynthesis via de novo pathway; 5-amino-1-(5-phospho-D-ribosyl)imidazole from N(2)-formyl-N(1)-(5-phospho-D-ribosyl)glycinamide: step 1/2. Its function is as follows. Part of the phosphoribosylformylglycinamidine synthase complex involved in the purines biosynthetic pathway. Catalyzes the ATP-dependent conversion of formylglycinamide ribonucleotide (FGAR) and glutamine to yield formylglycinamidine ribonucleotide (FGAM) and glutamate. The FGAM synthase complex is composed of three subunits. PurQ produces an ammonia molecule by converting glutamine to glutamate. PurL transfers the ammonia molecule to FGAR to form FGAM in an ATP-dependent manner. PurS interacts with PurQ and PurL and is thought to assist in the transfer of the ammonia molecule from PurQ to PurL. This is Phosphoribosylformylglycinamidine synthase subunit PurQ from Methanosarcina acetivorans (strain ATCC 35395 / DSM 2834 / JCM 12185 / C2A).